Here is a 456-residue protein sequence, read N- to C-terminus: Na(+)/H(+) antiporter NhaA 3 (456 aa).

11 consecutive transmembrane segments (helical) span residues 32-52 (IEAT…TLSN), 87-107 (GLMT…VVLG), 114-134 (MVAL…GLYL), 145-165 (GWGV…ALLG), 174-194 (VFLL…VAVG), 202-222 (TALA…LLGV), 233-253 (AIIW…GVIL), 318-338 (WVAF…PITI), 347-367 (LAVM…FAWL), 382-402 (WGGL…ALFI), and 417-437 (LGIL…LCAL).

Belongs to the NhaA Na(+)/H(+) (TC 2.A.33) antiporter family.

Its subcellular location is the cell inner membrane. The enzyme catalyses Na(+)(in) + 2 H(+)(out) = Na(+)(out) + 2 H(+)(in). Its function is as follows. Na(+)/H(+) antiporter that extrudes sodium in exchange for external protons. The protein is Na(+)/H(+) antiporter NhaA 3 of Acidiphilium cryptum (strain JF-5).